The sequence spans 249 residues: Ribosomal RNA small subunit methyltransferase G (249 aa).

S-adenosyl-L-methionine-binding positions include glycine 88, phenylalanine 93, 111–113 (DAT), 139–140 (AE), and arginine 158. The cysteines at positions 164 and 249 are disulfide-linked. The RNA binding stretch occupies residues 245 to 246 (RH).

It belongs to the methyltransferase superfamily. RNA methyltransferase RsmG family.

It localises to the cytoplasm. The enzyme catalyses guanosine(527) in 16S rRNA + S-adenosyl-L-methionine = N(7)-methylguanosine(527) in 16S rRNA + S-adenosyl-L-homocysteine. Its function is as follows. Specifically methylates the N7 position of guanine in position 527 of 16S rRNA. Shows a marked preference for deproteinized 16S rRNA as substrate and is completely inactive with native 30S subunits as substrate. In Thermus thermophilus (strain ATCC 27634 / DSM 579 / HB8), this protein is Ribosomal RNA small subunit methyltransferase G.